Here is a 279-residue protein sequence, read N- to C-terminus: uncharacterized protein (279 aa).

Residues Met-1–Arg-29 are compositionally biased toward low complexity. Disordered stretches follow at residues Met-1–Glu-111 and Leu-137–Leu-233. Positions Thr-30 to Tyr-44 are enriched in basic and acidic residues. A compositionally biased stretch (low complexity) spans Ser-45 to Tyr-59. Residues Glu-142 to Glu-153 show a composition bias toward acidic residues. Over residues Glu-170 to Ser-186 the composition is skewed to low complexity. Residues Ala-189–Val-205 show a composition bias toward polar residues. A compositionally biased stretch (basic and acidic residues) spans Ser-221 to Leu-233.

This is an uncharacterized protein from Caenorhabditis elegans.